The following is an 827-amino-acid chain: Villin-1 (827 aa).

The necessary for homodimerization stretch occupies residues 1–126 (MTKLNAQVKG…IRKGGVASGM (126 aa)). The tract at residues 1–734 (MTKLNAQVKG…YDDLKAELGN (734 aa)) is core. Residues 27 to 76 (MQMVPVPSSTFGSFFDGDCYVVLAIHKTSSTLSYDIHYWIGQDSSQDEQG) form a Gelsolin-like 1 repeat. 2 LPA/PIP2-binding site regions span residues 112–119 (KQGLVIRK) and 138–146 (RLLHVKGKR). Gelsolin-like repeat units follow at residues 148–188 (VLAG…MERL) and 265–309 (LVVR…QERS). Phosphoserine is present on S366. Gelsolin-like repeat units follow at residues 407–457 (DLEL…DEIA), 528–568 (TKAF…DERE), and 631–672 (FLAT…EEKK). S735 and S776 each carry phosphoserine. The interval 735–827 (SGDWSQIADE…QNIKKEKGLF (93 aa)) is headpiece. Residues 761–827 (SGPLPTFPLE…QNIKKEKGLF (67 aa)) enclose the HP domain. Positions 816 to 824 (KQQNIKKEK) are LPA/PIP2-binding site 3.

It belongs to the villin/gelsolin family. Monomer. Homodimer; homodimerization is necessary for actin-bundling. Associates with F-actin; phosphorylation at tyrosine residues decreases the association with F-actin. Interacts (phosphorylated at C-terminus tyrosine phosphorylation sites) with PLCG1 (via the SH2 domains). Interacts (phosphorylated form) with PLCG1; the interaction is enhanced by hepatocyte growth factor (HGF). In terms of processing, phosphorylated on tyrosine residues by SRC. The unphosphorylated form increases the initial rate of actin-nucleating activity, whereas the tyrosine phosphorylated form inhibits actin-nucleating activity, enhances actin-bundling activity and enhances actin-severing activity by reducing high Ca(2+) requirements. The tyrosine phosphorylated form does not regulate actin-capping activity. Tyrosine phosphorylation is essential for cell migration: tyrosine phosphorylation sites in the N-terminus half regulate actin reorganization and cell morphology, whereas tyrosine phosphorylation sites in the C-terminus half regulate cell migration via interaction with PLCG1. Tyrosine phosphorylation is induced by epidermal growth factor (EGF) and stimulates cell migration. Expressed in small intestin, colon, kidney and enterocytes (at protein level).

The protein localises to the cytoplasm. The protein resides in the cytoskeleton. It is found in the cell projection. Its subcellular location is the microvillus. It localises to the lamellipodium. The protein localises to the ruffle. The protein resides in the filopodium tip. It is found in the filopodium. In terms of biological role, epithelial cell-specific Ca(2+)-regulated actin-modifying protein that modulates the reorganization of microvillar actin filaments. Plays a role in the actin nucleation, actin filament bundle assembly, actin filament capping and severing. Binds phosphatidylinositol 4,5-bisphosphate (PIP2) and lysophosphatidic acid (LPA); binds LPA with higher affinity than PIP2. Binding to LPA increases its phosphorylation by SRC and inhibits all actin-modifying activities. Binding to PIP2 inhibits actin-capping and -severing activities but enhances actin-bundling activity. Regulates the intestinal epithelial cell morphology, cell invasion, cell migration and apoptosis. Protects against apoptosis induced by dextran sodium sulfate (DSS) in the gastrointestinal epithelium. Appears to regulate cell death by maintaining mitochondrial integrity. Enhances hepatocyte growth factor (HGF)-induced epithelial cell motility, chemotaxis and wound repair. Upon S.flexneri cell infection, its actin-severing activity enhances actin-based motility of the bacteria and plays a role during the dissemination. The chain is Villin-1 (Vil1) from Mus musculus (Mouse).